Consider the following 295-residue polypeptide: Tyrosine recombinase XerD (295 aa).

Residues 1 to 85 form the Core-binding (CB) domain; sequence MNTIIEEYLN…TIRSFHQFAL (85 aa). In terms of domain architecture, Tyr recombinase spans 106 to 289; the sequence is KLPDVLEIDE…SKSQIRKMYT (184 aa). Active-site residues include Arg146, Lys170, His241, Arg244, and His267. Tyr276 (O-(3'-phospho-DNA)-tyrosine intermediate) is an active-site residue.

It belongs to the 'phage' integrase family. XerD subfamily. As to quaternary structure, forms a cyclic heterotetrameric complex composed of two molecules of XerC and two molecules of XerD.

Its subcellular location is the cytoplasm. Site-specific tyrosine recombinase, which acts by catalyzing the cutting and rejoining of the recombining DNA molecules. The XerC-XerD complex is essential to convert dimers of the bacterial chromosome into monomers to permit their segregation at cell division. It also contributes to the segregational stability of plasmids. This Staphylococcus epidermidis (strain ATCC 12228 / FDA PCI 1200) protein is Tyrosine recombinase XerD.